The following is a 231-amino-acid chain: Large ribosomal subunit protein uL1 (231 aa).

The protein belongs to the universal ribosomal protein uL1 family. In terms of assembly, part of the 50S ribosomal subunit.

Binds directly to 23S rRNA. The L1 stalk is quite mobile in the ribosome, and is involved in E site tRNA release. Functionally, protein L1 is also a translational repressor protein, it controls the translation of the L11 operon by binding to its mRNA. The protein is Large ribosomal subunit protein uL1 of Francisella tularensis subsp. tularensis (strain WY96-3418).